Consider the following 520-residue polypeptide: MSSDIHSEKILILDFGSQYTQLIARRVREAHVYCELHPFDMDLAAIRAFAPRGIILSGGPKSVYEEGAPAVEEALFELGVPVLGICYGMQLMSRHFGGQVVPAGKREFGHADLLAVGTPGPLFDGFFVEGKSPVWMSHGDHVSLVPAGFQVVGETANAPVCAIQDLARNLYGVQFHPEVNHTPRGELLIDTFVRKICGCSGQWTPGHIIDDAVSRIRAQVGNDRVILGLSGGVDSSVAAALIHRAIGDQLTCVFVDNGLLRLSEGDQVMATFAENLGVKVIRVDAEDRFLTALAGESDPEKKRKIIGKLFVDIFEEESNKITDARWLAQGTIYPDVIESAGAKTGKAHNIKSHHNVGGLPDYMKLKLLEPLRELFKDEVRAIGEELGLPHQMVWRHPFPGPGLGVRILGEVKKEYADILRRADAIYIEELYAAGHYDKISQAFAVFLPVKSVGVMGDGRTYEYVVALRAVETKDFMTAGWYPLPYEDMARISSRIINEVKGVNRVVYDISSKPPATIEWE.

In terms of domain architecture, Glutamine amidotransferase type-1 spans 9–202 (KILILDFGSQ…VRKICGCSGQ (194 aa)). Cys-86 acts as the Nucleophile in catalysis. Catalysis depends on residues His-176 and Glu-178. In terms of domain architecture, GMPS ATP-PPase spans 203-395 (WTPGHIIDDA…LGLPHQMVWR (193 aa)). Position 230–236 (230–236 (SGGVDSS)) interacts with ATP.

As to quaternary structure, homodimer.

The catalysed reaction is XMP + L-glutamine + ATP + H2O = GMP + L-glutamate + AMP + diphosphate + 2 H(+). Its pathway is purine metabolism; GMP biosynthesis; GMP from XMP (L-Gln route): step 1/1. In terms of biological role, catalyzes the synthesis of GMP from XMP. The polypeptide is GMP synthase [glutamine-hydrolyzing] (Geobacter metallireducens (strain ATCC 53774 / DSM 7210 / GS-15)).